An 821-amino-acid chain; its full sequence is Calpain-3 (821 aa).

The interval 1–37 (MPTVISPTVAPRTGAEPRSPGPVPHPAQGKTTEAGGG) is disordered. A Calpain catalytic domain is found at 74–417 (LYLDPEFPPD…FTKLEICNLT (344 aa)). Catalysis depends on residues Cys129, His334, and Asn358. The domain III stretch occupies residues 418–586 (ADALESDKLQ…KRNLSEEAEN (169 aa)). A linker region spans residues 587–649 (TISVDRPVKK…RPGHTDQESE (63 aa)). The interval 603-651 (IFVSDRANSNKELGVDQEAEEGKDKTGPDKQGESPQPRPGHTDQESEEQ) is disordered. The span at 622–634 (EEGKDKTGPDKQG) shows a compositional bias: basic and acidic residues. EF-hand domains follow at residues 649-683 (EEQQ…VVNK), 692-725 (FTLE…KKIK), 722-757 (KKIK…AGFH), and 787-821 (VRLE…TMYA). The tract at residues 650–820 (EQQQFRNIFR…VLEWLQLTMY (171 aa)) is domain IV. 18 residues coordinate Ca(2+): Ala662, Asp665, Glu667, Glu672, Asp705, Asp707, Ser709, Arg711, Glu716, Asp735, Asp737, Ser739, Thr741, Glu746, Asp800, Asp802, Asp804, and Ile806.

The protein belongs to the peptidase C2 family. In terms of assembly, homodimer; via EF-hand domain 4. Interacts with TTN/titin. Interacts with CMYA5; this interaction, which results in CMYA5 proteolysis, may protect CAPN3 from autolysis. Interacts with SIMC1. Interacts with UTP25; the interaction is required for CAPN3 translocation to the nucleolus. As to expression, skeletal muscle.

Its subcellular location is the cytoplasm. The protein resides in the nucleus. The protein localises to the nucleolus. The catalysed reaction is Broad endopeptidase activity.. Its activity is regulated as follows. Activated by micromolar concentrations of calcium and inhibited by calpastatin. Its function is as follows. Calcium-regulated non-lysosomal thiol-protease. Proteolytically cleaves CTBP1 at 'His-399'. Mediates, with UTP25, the proteasome-independent degradation of p53/TP53. The protein is Calpain-3 (Capn3) of Rattus norvegicus (Rat).